Reading from the N-terminus, the 466-residue chain is Tubulointerstitial nephritis antigen-like (466 aa).

An N-terminal signal peptide occupies residues 1–21 (MWGCWLGLLLLLLAGQAALEA). Residues 49 to 96 (EQDMCCRGRADECALPYLGATCYCDLFCNRTVSDCCPDFWDFCLGIPP) form the SMB domain. 5 disulfide bridges follow: Cys-53-Cys-72, Cys-70-Cys-72, Cys-70-Cys-84, Cys-76-Cys-83, and Cys-84-Cys-91. A glycan (N-linked (GlcNAc...) asparagine) is linked at Asn-77. Residue Asn-160 is glycosylated (N-linked (GlcNAc...) asparagine).

This sequence belongs to the peptidase C1 family. Post-translationally, glycosylated. Highly expressed in kidney, heart and adrenocortical cells of adrenal glands. Moderately expressed in spleen and liver. Also found in prostate, seminal vesicle, epididymis and testis in male reproductive organs. In adrenal glands is found in the outer cortical regions corresponding to the zona glomerulosa (zG) and the undifferentiated cell zone (zU) (at protein level).

Its subcellular location is the secreted. May be implicated in the adrenocortical zonation and in mechanisms for repressing the CYP11B1 gene expression in adrenocortical cells. This is a non catalytic peptidase C1 family protein. The sequence is that of Tubulointerstitial nephritis antigen-like (Tinagl1) from Mus musculus (Mouse).